A 550-amino-acid polypeptide reads, in one-letter code: Chaperonin GroEL 2 (550 aa).

ATP contacts are provided by residues 30-33 (TLGP), lysine 51, 87-91 (DGTTT), glycine 415, and aspartate 496.

The protein belongs to the chaperonin (HSP60) family. As to quaternary structure, forms a cylinder of 14 subunits composed of two heptameric rings stacked back-to-back. Interacts with the co-chaperonin GroES.

The protein localises to the cytoplasm. The catalysed reaction is ATP + H2O + a folded polypeptide = ADP + phosphate + an unfolded polypeptide.. In terms of biological role, together with its co-chaperonin GroES, plays an essential role in assisting protein folding. The GroEL-GroES system forms a nano-cage that allows encapsulation of the non-native substrate proteins and provides a physical environment optimized to promote and accelerate protein folding. In Bradyrhizobium diazoefficiens (strain JCM 10833 / BCRC 13528 / IAM 13628 / NBRC 14792 / USDA 110), this protein is Chaperonin GroEL 2.